The following is a 397-amino-acid chain: Phosphoglycerate transport regulatory protein PgtC (397 aa).

The first 24 residues, 1-24 (MFGSCQAYSRELVMATTFSPSATA), serve as a signal peptide directing secretion. Residues 102 to 117 (TSVAVAVSGFGLLINR) traverse the membrane as a helical segment.

The protein localises to the cell membrane. Its function is as follows. Required for pgtP expression, it may act jointly with the PgtA/PgtB signaling proteins. The protein is Phosphoglycerate transport regulatory protein PgtC (pgtC) of Salmonella typhi.